The chain runs to 320 residues: Olfactory receptor 13C8 (320 aa).

The Extracellular segment spans residues 1–25 (MERTNDSTSTEFFLVGLSAHPKLQT). Residue Asn5 is glycosylated (N-linked (GlcNAc...) asparagine). Residues 26–46 (VFFVLILWMYLMILLGNGVLI) traverse the membrane as a helical segment. Residues 47 to 54 (SVIIFDSH) are Cytoplasmic-facing. The helical transmembrane segment at 55-75 (LHTPMYFFLCNLSFLDVCYTS) threads the bilayer. The Extracellular portion of the chain corresponds to 76–99 (SSVPLILASFLAVKKKVSFSGCMV). Cys97 and Cys189 are oxidised to a cystine. A helical transmembrane segment spans residues 100-120 (QMFISFAMGATECMILGTMAL). Topologically, residues 121–139 (DRYVAICYPLRYPVIMSKG) are cytoplasmic. Residues 140–160 (AYVAMAAGSWVTGLVDSVVQT) form a helical membrane-spanning segment. The Extracellular portion of the chain corresponds to 161-197 (AFAMQLPFCANNVIKHFVCEILAILKLACADISINVI). The helical transmembrane segment at 198 to 217 (SMTGSNLIVLVIPLLVISIS) threads the bilayer. Residues 218–237 (YIFIVATILRIPSTEGKHKA) lie on the Cytoplasmic side of the membrane. Residues 238 to 258 (FSTCSAHLTVVIIFYGTIFFM) form a helical membrane-spanning segment. At 259–277 (YAKPESKASVDSGNEDIIE) the chain is on the extracellular side. The chain crosses the membrane as a helical span at residues 278–298 (ALISLFYGVMTPMLNPLIYSL). Over 299 to 320 (RNKDVKAAVKNILCRKNFSDGK) the chain is Cytoplasmic.

It belongs to the G-protein coupled receptor 1 family.

Its subcellular location is the cell membrane. Its function is as follows. Odorant receptor. This Homo sapiens (Human) protein is Olfactory receptor 13C8 (OR13C8).